A 61-amino-acid polypeptide reads, in one-letter code: Large ribosomal subunit protein uL30 (61 aa).

The protein belongs to the universal ribosomal protein uL30 family. As to quaternary structure, part of the 50S ribosomal subunit.

The sequence is that of Large ribosomal subunit protein uL30 from Oenococcus oeni (strain ATCC BAA-331 / PSU-1).